The chain runs to 359 residues: Phosphate acyltransferase (359 aa).

The tract at residues 338 to 359 is disordered; sequence LEGAAGRAARPPPPRRASSHDA.

This sequence belongs to the PlsX family. In terms of assembly, homodimer. Probably interacts with PlsY.

It is found in the cytoplasm. The catalysed reaction is a fatty acyl-[ACP] + phosphate = an acyl phosphate + holo-[ACP]. The protein operates within lipid metabolism; phospholipid metabolism. Functionally, catalyzes the reversible formation of acyl-phosphate (acyl-PO(4)) from acyl-[acyl-carrier-protein] (acyl-ACP). This enzyme utilizes acyl-ACP as fatty acyl donor, but not acyl-CoA. The protein is Phosphate acyltransferase of Anaeromyxobacter sp. (strain Fw109-5).